The primary structure comprises 780 residues: Ino eighty subunit 1 (780 aa).

Disordered stretches follow at residues 1 to 25 (MADVESAGVDDSFAQSEPHDEQQIH) and 563 to 780 (ANGP…PGWN). Over residues 563–584 (ANGPRRDRKKEREERQKAREEA) the composition is skewed to basic and acidic residues. The segment covering 600 to 613 (SRARAQRNAKRKLA) has biased composition (basic residues). The segment covering 614 to 635 (RAAAAASSTPSASTPKTAAARS) has biased composition (low complexity). Composition is skewed to acidic residues over residues 676–686 (LEGEESLDDID) and 723–751 (DADDALSSDEEEEEAEDEELDEMDVEGDD).

In terms of assembly, component of the chromatin-remodeling INO80 complex.

The protein localises to the nucleus. Probably involved in transcription regulation via its interaction with the INO80 complex, a chromatin-remodeling complex. This is Ino eighty subunit 1 from Emericella nidulans (strain FGSC A4 / ATCC 38163 / CBS 112.46 / NRRL 194 / M139) (Aspergillus nidulans).